The following is a 349-amino-acid chain: UDP-3-O-acylglucosamine N-acyltransferase 1 (349 aa).

His241 functions as the Proton acceptor in the catalytic mechanism.

The protein belongs to the transferase hexapeptide repeat family. LpxD subfamily. In terms of assembly, homotrimer.

It carries out the reaction a UDP-3-O-[(3R)-3-hydroxyacyl]-alpha-D-glucosamine + a (3R)-hydroxyacyl-[ACP] = a UDP-2-N,3-O-bis[(3R)-3-hydroxyacyl]-alpha-D-glucosamine + holo-[ACP] + H(+). Its pathway is bacterial outer membrane biogenesis; LPS lipid A biosynthesis. In terms of biological role, catalyzes the N-acylation of UDP-3-O-acylglucosamine using 3-hydroxyacyl-ACP as the acyl donor. Is involved in the biosynthesis of lipid A, a phosphorylated glycolipid that anchors the lipopolysaccharide to the outer membrane of the cell. This chain is UDP-3-O-acylglucosamine N-acyltransferase 1, found in Gloeobacter violaceus (strain ATCC 29082 / PCC 7421).